We begin with the raw amino-acid sequence, 122 residues long: Large ribosomal subunit protein uL14 (122 aa).

Belongs to the universal ribosomal protein uL14 family. As to quaternary structure, part of the 50S ribosomal subunit. Forms a cluster with proteins L3 and L19. In the 70S ribosome, L14 and L19 interact and together make contacts with the 16S rRNA in bridges B5 and B8.

Functionally, binds to 23S rRNA. Forms part of two intersubunit bridges in the 70S ribosome. This Teredinibacter turnerae (strain ATCC 39867 / T7901) protein is Large ribosomal subunit protein uL14.